Reading from the N-terminus, the 452-residue chain is Keratin, type II cytoskeletal 80 (452 aa).

The head stretch occupies residues 1 to 82 (MAYRSCVVGF…DPAVQQQKNQ (82 aa)). Ser45 is modified (phosphoserine). The tract at residues 82–118 (QEKEEMKALNDKFASLIGKVQALEQRNQLLETRWSFL) is coil 1A. The IF rod domain maps to 83–394 (EKEEMKALND…KLMEGEESRM (312 aa)). Residues 119–135 (QGQGSATFDLSHHYETF) form a linker 1 region. Residues 136-227 (QGRLQEELRK…TVYEQELKDL (92 aa)) form a coil 1B region. The interval 228-251 (TAQVKDVSVTVGLDSRCHIDLSGI) is linker 12. The tract at residues 252–390 (VEEVKAQYDA…ATYHKLMEGE (139 aa)) is coil 2. Residues 391 to 452 (ESRMDLPSAT…YLSQESEASE (62 aa)) are tail. A disordered region spans residues 412-452 (TASKSGLTKTSSRKKKNRRGPVIKITEMSEKYLSQESEASE). The segment covering 422–432 (SSRKKKNRRGP) has biased composition (basic residues). The span at 443-452 (YLSQESEASE) shows a compositional bias: polar residues.

It belongs to the intermediate filament family. In terms of assembly, heterotetramer of two type I and two type II keratins.

The polypeptide is Keratin, type II cytoskeletal 80 (Krt80) (Mus musculus (Mouse)).